The sequence spans 90 residues: Probable Fe(2+)-trafficking protein (90 aa).

This sequence belongs to the Fe(2+)-trafficking protein family.

In terms of biological role, could be a mediator in iron transactions between iron acquisition and iron-requiring processes, such as synthesis and/or repair of Fe-S clusters in biosynthetic enzymes. This chain is Probable Fe(2+)-trafficking protein, found in Xylella fastidiosa (strain 9a5c).